We begin with the raw amino-acid sequence, 305 residues long: Ribonucleoside-diphosphate reductase small subunit (305 aa).

The Fe cation site is built by Glu-64, Glu-94, and His-97. Tyr-101 is a catalytic residue. The chain crosses the membrane as a helical span at residues 150-170 (ILMFLIVEGIYFISSFYSISL). Fe cation is bound by residues Glu-157, Glu-191, and His-194.

It belongs to the ribonucleoside diphosphate reductase small chain family. Heterotetramer composed of a homodimer of the large subunit (R1) and a homodimer of the small subunit (R2). Larger multisubunit protein complex are also active, composed of (R1)n(R2)n. The cofactor is Fe cation.

It is found in the host membrane. It carries out the reaction a 2'-deoxyribonucleoside 5'-diphosphate + [thioredoxin]-disulfide + H2O = a ribonucleoside 5'-diphosphate + [thioredoxin]-dithiol. Its function is as follows. Ribonucleoside-diphosphate reductase holoenzyme provides the precursors necessary for viral DNA synthesis. Allows virus growth in non-dividing cells, as well as reactivation from latency in infected hosts. Catalyzes the biosynthesis of deoxyribonucleotides from the corresponding ribonucleotides. The sequence is that of Ribonucleoside-diphosphate reductase small subunit from Homo sapiens (Human).